The primary structure comprises 342 residues: Probable dual-specificity RNA methyltransferase RlmN (342 aa).

Glutamate 91 functions as the Proton acceptor in the catalytic mechanism. Residues 97–326 enclose the Radical SAM core domain; it reads YRFGNTACVS…CTVRRELGSD (230 aa). Cysteines 104 and 331 form a disulfide. Positions 111, 115, and 118 each coordinate [4Fe-4S] cluster. S-adenosyl-L-methionine contacts are provided by residues 157–158, serine 189, 212–214, and asparagine 288; these read GE and SLH. Cysteine 331 functions as the S-methylcysteine intermediate in the catalytic mechanism.

It belongs to the radical SAM superfamily. RlmN family. [4Fe-4S] cluster is required as a cofactor.

The protein resides in the cytoplasm. The catalysed reaction is adenosine(2503) in 23S rRNA + 2 reduced [2Fe-2S]-[ferredoxin] + 2 S-adenosyl-L-methionine = 2-methyladenosine(2503) in 23S rRNA + 5'-deoxyadenosine + L-methionine + 2 oxidized [2Fe-2S]-[ferredoxin] + S-adenosyl-L-homocysteine. The enzyme catalyses adenosine(37) in tRNA + 2 reduced [2Fe-2S]-[ferredoxin] + 2 S-adenosyl-L-methionine = 2-methyladenosine(37) in tRNA + 5'-deoxyadenosine + L-methionine + 2 oxidized [2Fe-2S]-[ferredoxin] + S-adenosyl-L-homocysteine. Specifically methylates position 2 of adenine 2503 in 23S rRNA and position 2 of adenine 37 in tRNAs. The protein is Probable dual-specificity RNA methyltransferase RlmN of Thermoanaerobacter pseudethanolicus (strain ATCC 33223 / 39E) (Clostridium thermohydrosulfuricum).